The chain runs to 477 residues: Bifunctional protein HldE (477 aa).

The tract at residues 1–318 is ribokinase; the sequence is MKVNLPAFER…ENAVRGRAAT (318 aa). 195–198 serves as a coordination point for ATP; sequence NLSE. D264 is an active-site residue. Positions 344–477 are cytidylyltransferase; it reads MTNGVFDILH…IKKIQTESEK (134 aa).

In the N-terminal section; belongs to the carbohydrate kinase PfkB family. The protein in the C-terminal section; belongs to the cytidylyltransferase family. In terms of assembly, homodimer.

The enzyme catalyses D-glycero-beta-D-manno-heptose 7-phosphate + ATP = D-glycero-beta-D-manno-heptose 1,7-bisphosphate + ADP + H(+). The catalysed reaction is D-glycero-beta-D-manno-heptose 1-phosphate + ATP + H(+) = ADP-D-glycero-beta-D-manno-heptose + diphosphate. Its pathway is nucleotide-sugar biosynthesis; ADP-L-glycero-beta-D-manno-heptose biosynthesis; ADP-L-glycero-beta-D-manno-heptose from D-glycero-beta-D-manno-heptose 7-phosphate: step 1/4. It participates in nucleotide-sugar biosynthesis; ADP-L-glycero-beta-D-manno-heptose biosynthesis; ADP-L-glycero-beta-D-manno-heptose from D-glycero-beta-D-manno-heptose 7-phosphate: step 3/4. Catalyzes the phosphorylation of D-glycero-D-manno-heptose 7-phosphate at the C-1 position to selectively form D-glycero-beta-D-manno-heptose-1,7-bisphosphate. Its function is as follows. Catalyzes the ADP transfer from ATP to D-glycero-beta-D-manno-heptose 1-phosphate, yielding ADP-D-glycero-beta-D-manno-heptose. This Salmonella arizonae (strain ATCC BAA-731 / CDC346-86 / RSK2980) protein is Bifunctional protein HldE.